The sequence spans 428 residues: Enolase (428 aa).

(2R)-2-phosphoglycerate is bound at residue Gln163. The active-site Proton donor is the Glu205. Residues Asp242, Glu285, and Asp312 each contribute to the Mg(2+) site. Residues Lys337, Arg366, Ser367, and Lys388 each contribute to the (2R)-2-phosphoglycerate site. The Proton acceptor role is filled by Lys337.

This sequence belongs to the enolase family. Requires Mg(2+) as cofactor.

Its subcellular location is the cytoplasm. It localises to the secreted. The protein localises to the cell surface. The enzyme catalyses (2R)-2-phosphoglycerate = phosphoenolpyruvate + H2O. It functions in the pathway carbohydrate degradation; glycolysis; pyruvate from D-glyceraldehyde 3-phosphate: step 4/5. Its function is as follows. Catalyzes the reversible conversion of 2-phosphoglycerate (2-PG) into phosphoenolpyruvate (PEP). It is essential for the degradation of carbohydrates via glycolysis. In Polynucleobacter asymbioticus (strain DSM 18221 / CIP 109841 / QLW-P1DMWA-1) (Polynucleobacter necessarius subsp. asymbioticus), this protein is Enolase.